Here is a 48-residue protein sequence, read N- to C-terminus: 4-carboxymuconolactone decarboxylase (48 aa).

It belongs to the carboxymuconolactone decarboxylase family.

The enzyme catalyses (R)-2-(carboxymethyl)-5-oxo-2,5-dihydro-2-furoate + H(+) = (4,5-dihydro-5-oxofuran-2-yl)-acetate + CO2. The protein operates within aromatic compound metabolism; beta-ketoadipate pathway; 5-oxo-4,5-dihydro-2-furylacetate from 3-carboxy-cis,cis-muconate: step 2/2. The chain is 4-carboxymuconolactone decarboxylase from Pseudomonas putida (Arthrobacter siderocapsulatus).